A 305-amino-acid chain; its full sequence is Acetylglutamate kinase (305 aa).

Substrate-binding positions include 75–76, R97, and N202; that span reads GG.

The protein belongs to the acetylglutamate kinase family. ArgB subfamily.

It localises to the cytoplasm. It catalyses the reaction N-acetyl-L-glutamate + ATP = N-acetyl-L-glutamyl 5-phosphate + ADP. The protein operates within amino-acid biosynthesis; L-arginine biosynthesis; N(2)-acetyl-L-ornithine from L-glutamate: step 2/4. Its function is as follows. Catalyzes the ATP-dependent phosphorylation of N-acetyl-L-glutamate. The chain is Acetylglutamate kinase from Rhodospirillum centenum (strain ATCC 51521 / SW).